A 417-amino-acid chain; its full sequence is Mast cell carboxypeptidase A (417 aa).

The first 15 residues, 1–15 (MRLILPVGLIATTLA), serve as a signal peptide directing secretion. Residues 16-109 (IAPVRFDREK…IEKQFDVKED (94 aa)) constitute a propeptide, activation peptide. The 295-residue stretch at 118-412 (KYNNWEKIVA…LAVKFIAKYI (295 aa)) folds into the Peptidase M14 domain. Cystine bridges form between C173-C186 and C245-C268. 2 residues coordinate Zn(2+): H176 and E179. Residue H304 coordinates Zn(2+). The active-site Proton donor/acceptor is E378.

This sequence belongs to the peptidase M14 family. The cofactor is Zn(2+).

The protein resides in the cytoplasmic vesicle. It localises to the secretory vesicle. It carries out the reaction Release of a C-terminal amino acid, but little or no action with -Asp, -Glu, -Arg, -Lys or -Pro.. This chain is Mast cell carboxypeptidase A (CPA3), found in Homo sapiens (Human).